We begin with the raw amino-acid sequence, 485 residues long: Protein hunchback (485 aa).

Residues 1-77 (TSSTARKTPE…EEDDDIRTPK (77 aa)) form a disordered region. Over residues 16-37 (QDQNQLLKTPIQTNGNQQSTFD) the composition is skewed to polar residues. The segment covering 59-72 (ADVDDENDAEEDDD) has biased composition (acidic residues). 4 C2H2-type zinc fingers span residues 87-109 (YKCKQCDFIAVTKLSFWEHNRIH), 116-138 (LKCQKCPFITEYKHHLEYHLRNH), 144-166 (FQCKQCNYSCVNKSMLNSHMKSH), and 172-196 (YRCKDCNYATKYCHSLKLHLRKYSH). 3 disordered regions span residues 229-270 (KDEG…PPSS), 318-361 (NGWQ…QVKH), and 398-422 (PKPVQLQLPTSSTTTPLKTTSEDDS). Polar residues predominate over residues 257-270 (NFEQSQHVPTPPSS). Over residues 325 to 335 (NCNEEETPEKE) the composition is skewed to acidic residues. Residues 345 to 358 (DLSSNPSTPSTVSQ) are compositionally biased toward polar residues. Residues 402 to 416 (QLQLPTSSTTTPLKT) show a composition bias toward low complexity. C2H2-type zinc fingers lie at residues 432-454 (YECKFCDISFKHAVLYTIHMGYH) and 460-484 (FKCNACGKKCEDRVAFFLHIARDAH).

The protein belongs to the hunchback C2H2-type zinc-finger protein family.

It localises to the nucleus. In terms of biological role, gap class segmentation protein that controls development of head structures. The sequence is that of Protein hunchback (hb) from Clogmia albipunctata (Mothmidge).